Reading from the N-terminus, the 520-residue chain is Ubiquitin carboxyl-terminal hydrolase 3 (520 aa).

Residue Met1 is modified to N-acetylmethionine. A UBP-type zinc finger spans residues 1-121 (MECPHLSSSV…QKVREHLQNL (121 aa)). Zn(2+) contacts are provided by Cys3, His5, Cys29, Cys32, Cys41, Cys44, Cys49, His56, His60, His82, Cys95, and Cys98. One can recognise a USP domain in the interval 159–511 (TGLRNLGNTC…KAYILFYVEH (353 aa)). Residue Cys168 is the Nucleophile of the active site. The active-site Proton acceptor is His471.

Belongs to the peptidase C19 family. USP3 subfamily. In terms of assembly, interacts (via UBP-type domain) with H2A; the interaction is less efficient than with monoubiquitinated H2A. In terms of tissue distribution, expressed in all tissues examined, with strongest expression in pancreas.

The protein localises to the nucleus. It is found in the cytoplasm. It catalyses the reaction Thiol-dependent hydrolysis of ester, thioester, amide, peptide and isopeptide bonds formed by the C-terminal Gly of ubiquitin (a 76-residue protein attached to proteins as an intracellular targeting signal).. Functionally, deubiquitinase that plays a role in several cellular processes including transcriptional regulation, cell cycle progression or innate immunity. In response to DNA damage, deubiquitinates monoubiquitinated target proteins such as histone H2A and H2AX and thereby counteracts RNF168- and RNF8-mediated ubiquitination. In turn, participates in the recruitment of DNA damage repair factors to DNA break sites. Required for proper progression through S phase and subsequent mitotic entry. Acts as a positive regulator of TP53 by deubiquitinating and stabilizing it to promote normal cell proliferation and transformation. Participates in establishing tolerance innate immune memory through non-transcriptional feedback. Mechanistically, negatively regulates TLR-induced NF-kappa-B signaling by targeting and removing the 'Lys-63'-linked polyubiquitin chains on MYD88. Negatively regulates the activation of type I interferon signaling by mediating 'Lys-63'-linked polyubiquitin chains on RIGI and IFIH1. Also deubiquinates ASC/PYCARD, the central adapter mediating the assembly and activation of most inflammasomes, and thereby promotes inflammasome activation. The polypeptide is Ubiquitin carboxyl-terminal hydrolase 3 (USP3) (Homo sapiens (Human)).